A 286-amino-acid polypeptide reads, in one-letter code: NADPH-dependent 7-cyano-7-deazaguanine reductase (286 aa).

Substrate is bound at residue 92–94 (IES). NADPH is bound at residue 94 to 95 (SK). The Thioimide intermediate role is filled by Cys-194. Asp-201 acts as the Proton donor in catalysis. 233–234 (HE) provides a ligand contact to substrate. Residue 262-263 (RG) coordinates NADPH.

Belongs to the GTP cyclohydrolase I family. QueF type 2 subfamily. In terms of assembly, homodimer.

It is found in the cytoplasm. The enzyme catalyses 7-aminomethyl-7-carbaguanine + 2 NADP(+) = 7-cyano-7-deazaguanine + 2 NADPH + 3 H(+). Its pathway is tRNA modification; tRNA-queuosine biosynthesis. Catalyzes the NADPH-dependent reduction of 7-cyano-7-deazaguanine (preQ0) to 7-aminomethyl-7-deazaguanine (preQ1). The protein is NADPH-dependent 7-cyano-7-deazaguanine reductase of Shewanella oneidensis (strain ATCC 700550 / JCM 31522 / CIP 106686 / LMG 19005 / NCIMB 14063 / MR-1).